We begin with the raw amino-acid sequence, 270 residues long: MRNIALRIEYDGTDFVGSQWQTNGRSVQGALEAAWQQLTGERRRMILAGRTDAGVHARGQVANVSTNTRHSLATIIRGLNGVLPEDIGILAAWEVPEEFHARYSAVRREYRYVIDNGRTPSPLLRRHAAYVPRRLDVAAMDRAIQQVIGTHDFAPLSDGPQEGSTVRICYDARCTCTEVWGQPLVLIDVAANAFLRHMVRNLVGTLIQVGEGRIDADGFAAVLAGANRRARVLAPAHGLYLMAVRYPEDGNAAADTLVAAVGVTETRMQL.

Asp-52 serves as the catalytic Nucleophile. Tyr-110 contacts substrate.

It belongs to the tRNA pseudouridine synthase TruA family. In terms of assembly, homodimer.

The enzyme catalyses uridine(38/39/40) in tRNA = pseudouridine(38/39/40) in tRNA. Functionally, formation of pseudouridine at positions 38, 39 and 40 in the anticodon stem and loop of transfer RNAs. This chain is tRNA pseudouridine synthase A, found in Roseiflexus castenholzii (strain DSM 13941 / HLO8).